The sequence spans 281 residues: Large ribosomal subunit protein uL2 (281 aa).

The segment covering 27 to 38 (DSPEKSLTEPLK) has biased composition (basic and acidic residues). 2 disordered regions span residues 27–59 (DSPE…GGHK) and 225–281 (AMNP…ARSQ). The span at 45 to 59 (VHGHITRRHQGGGHK) shows a compositional bias: basic residues.

The protein belongs to the universal ribosomal protein uL2 family. Part of the 50S ribosomal subunit. Forms a bridge to the 30S subunit in the 70S ribosome.

Functionally, one of the primary rRNA binding proteins. Required for association of the 30S and 50S subunits to form the 70S ribosome, for tRNA binding and peptide bond formation. It has been suggested to have peptidyltransferase activity; this is somewhat controversial. Makes several contacts with the 16S rRNA in the 70S ribosome. The chain is Large ribosomal subunit protein uL2 from Myxococcus xanthus (strain DK1622).